Here is a 269-residue protein sequence, read N- to C-terminus: MTNRYTTLFANLEKRNEGAFIPFVTIGDPNKALSFEIIDTLVSSGADALELGIPFSDPLADGPTIQEANIRALESGITPKDCFDILTKIRAKYPHIPIGLLLYANLVYANGIENFYQKCLDAGVDSILIADVPAHESKEFRDIAKKVSIAQIFIAPPDASESTLKQISELGSGYTYLLSRVGVTGTETAANMPVEDVLTKLREYNAPKPVLGFGISKPEQVQQAIKAGAAGAISGSATVKIIQNNISNKQKMLNELTYFVKEMKAATLN.

Active-site proton acceptor residues include E50 and D61.

It belongs to the TrpA family. In terms of assembly, tetramer of two alpha and two beta chains.

The catalysed reaction is (1S,2R)-1-C-(indol-3-yl)glycerol 3-phosphate + L-serine = D-glyceraldehyde 3-phosphate + L-tryptophan + H2O. The protein operates within amino-acid biosynthesis; L-tryptophan biosynthesis; L-tryptophan from chorismate: step 5/5. The alpha subunit is responsible for the aldol cleavage of indoleglycerol phosphate to indole and glyceraldehyde 3-phosphate. The chain is Tryptophan synthase alpha chain from Francisella tularensis subsp. tularensis (strain WY96-3418).